Here is a 267-residue protein sequence, read N- to C-terminus: Small ribosomal subunit protein uS3 (267 aa).

The KH type-2 domain occupies 43–111; sequence IRKAMSKDLE…QVQLNIFEVK (69 aa). The interval 216 to 267 is disordered; that stretch reads FEEQQAQQSNNRQGRRGDRRPRRGQRNAAPQQNAAAEAPAAAEAPAATETKE. The segment covering 228 to 240 has biased composition (basic residues); the sequence is QGRRGDRRPRRGQ. The segment covering 241 to 267 has biased composition (low complexity); the sequence is RNAAPQQNAAAEAPAAAEAPAATETKE.

It belongs to the universal ribosomal protein uS3 family. As to quaternary structure, part of the 30S ribosomal subunit. Forms a tight complex with proteins S10 and S14.

Functionally, binds the lower part of the 30S subunit head. Binds mRNA in the 70S ribosome, positioning it for translation. This chain is Small ribosomal subunit protein uS3, found in Bifidobacterium adolescentis (strain ATCC 15703 / DSM 20083 / NCTC 11814 / E194a).